Consider the following 336-residue polypeptide: Nucleoid-associated protein Spro_3255 (336 aa).

The protein belongs to the YejK family.

The protein localises to the cytoplasm. Its subcellular location is the nucleoid. This Serratia proteamaculans (strain 568) protein is Nucleoid-associated protein Spro_3255.